We begin with the raw amino-acid sequence, 413 residues long: Branched-chain-amino-acid aminotransferase 3, chloroplastic (413 aa).

The transit peptide at 1–60 (MERAAILPSVNQNYLLCPSRAFSTRLHSSTRNLSPPSFASIKLQHSSSSVSSNGGISLTR) directs the protein to the chloroplast. At lysine 259 the chain carries N6-(pyridoxal phosphate)lysine.

The protein belongs to the class-IV pyridoxal-phosphate-dependent aminotransferase family. Pyridoxal 5'-phosphate is required as a cofactor. In terms of tissue distribution, expressed in the phloem cells.

It localises to the plastid. The protein resides in the chloroplast. The enzyme catalyses L-leucine + 2-oxoglutarate = 4-methyl-2-oxopentanoate + L-glutamate. It carries out the reaction L-isoleucine + 2-oxoglutarate = (S)-3-methyl-2-oxopentanoate + L-glutamate. It catalyses the reaction L-valine + 2-oxoglutarate = 3-methyl-2-oxobutanoate + L-glutamate. The catalysed reaction is a 2-oxocarboxylate + L-methionine = 4-methylsulfanyl-2-oxobutanoate + an L-alpha-amino acid. The protein operates within amino-acid biosynthesis; L-isoleucine biosynthesis; L-isoleucine from 2-oxobutanoate: step 4/4. Its pathway is amino-acid biosynthesis; L-leucine biosynthesis; L-leucine from 3-methyl-2-oxobutanoate: step 4/4. It participates in amino-acid biosynthesis; L-valine biosynthesis; L-valine from pyruvate: step 4/4. Inhibited by Ser- or Thr-derived imine. Functionally, converts 2-oxo acids to branched-chain amino acids. Acts on leucine, isoleucine and valine. Also involved in methionine chain elongation cycle of aliphatic glucosinolate formation. Catalyzes the conversion of 5-methylthiopentyl-2-oxo and 6-methylthiohexyl-2-oxo acids to their respective Met derivatives, homomethionine and dihomo-methionine, respectively. This chain is Branched-chain-amino-acid aminotransferase 3, chloroplastic, found in Arabidopsis thaliana (Mouse-ear cress).